The sequence spans 203 residues: Auxin-induced protein 22E (203 aa).

Residues Leu15–Leu19 carry the EAR-like (transcriptional repression) motif. Residues Leu15–Ala77 are disordered. The segment covering Ser43 to Cys52 has biased composition (basic and acidic residues). Residues Ser58–Ser67 show a composition bias toward low complexity. The PB1 domain occupies Gly107–Gly199.

The protein belongs to the Aux/IAA family. Homodimers and heterodimers.

It localises to the nucleus. Its function is as follows. Aux/IAA proteins are short-lived transcriptional factors that function as repressors of early auxin response genes at low auxin concentrations. Repression is thought to result from the interaction with auxin response factors (ARFs), proteins that bind to the auxin-responsive promoter element (AuxRE). Formation of heterodimers with ARF proteins may alter their ability to modulate early auxin response genes expression. The polypeptide is Auxin-induced protein 22E (AUX22E) (Vigna radiata var. radiata (Mung bean)).